The sequence spans 992 residues: RNA-directed RNA polymerase (992 aa).

The 117-residue stretch at 656-772 (PCAIGFDASR…ICSVDDEEVV (117 aa)) folds into the RdRp catalytic domain. A disordered region spans residues 963–992 (PKSPTKPVQRTASKPDLPDSQWQQALAAPL). Polar residues predominate over residues 964 to 974 (KSPTKPVQRTA).

It belongs to the tombusviridae RNA polymerase family.

It is found in the host membrane. The enzyme catalyses RNA(n) + a ribonucleoside 5'-triphosphate = RNA(n+1) + diphosphate. Its function is as follows. RNA-dependent RNA polymerase that plays an essential role in the virus replication. This is RNA-directed RNA polymerase from Muhlenbergia (Blackwell switchgrass).